Here is a 130-residue protein sequence, read N- to C-terminus: Small ribosomal subunit protein uS9 (130 aa).

Belongs to the universal ribosomal protein uS9 family.

The polypeptide is Small ribosomal subunit protein uS9 (Thioalkalivibrio sulfidiphilus (strain HL-EbGR7)).